A 137-amino-acid chain; its full sequence is Large ribosomal subunit protein uL16 (137 aa).

This sequence belongs to the universal ribosomal protein uL16 family. Part of the 50S ribosomal subunit.

Its function is as follows. Binds 23S rRNA and is also seen to make contacts with the A and possibly P site tRNAs. The chain is Large ribosomal subunit protein uL16 from Stutzerimonas stutzeri (strain A1501) (Pseudomonas stutzeri).